A 479-amino-acid polypeptide reads, in one-letter code: Probable phosphatidate cytidylyltransferase (479 aa).

Over residues M1 to E28 the composition is skewed to basic and acidic residues. The tract at residues M1–K71 is disordered. The Cytoplasmic segment spans residues M1 to F108. The segment covering N53–N69 has biased composition (low complexity). Residues M109–I129 form a helical membrane-spanning segment. Residues A130–N159 are Extracellular-facing. A helical transmembrane segment spans residues W160–A180. The Cytoplasmic segment spans residues N181 to R192. A helical transmembrane segment spans residues Y193 to L213. Residues R214–N240 lie on the Extracellular side of the membrane. Residues F241–V261 form a helical membrane-spanning segment. The Cytoplasmic portion of the chain corresponds to C262–E293. A helical transmembrane segment spans residues G294–L314. Residues K315–A375 lie on the Extracellular side of the membrane. Residues L376 to I396 form a helical membrane-spanning segment. Over K397 to A479 the chain is Cytoplasmic.

The protein belongs to the CDS family.

It localises to the membrane. The catalysed reaction is a 1,2-diacyl-sn-glycero-3-phosphate + CTP + H(+) = a CDP-1,2-diacyl-sn-glycerol + diphosphate. It functions in the pathway phospholipid metabolism; CDP-diacylglycerol biosynthesis; CDP-diacylglycerol from sn-glycerol 3-phosphate: step 3/3. The sequence is that of Probable phosphatidate cytidylyltransferase (cdsA) from Dictyostelium discoideum (Social amoeba).